The primary structure comprises 174 residues: tRNA (cytidine(56)-2'-O)-methyltransferase (174 aa).

S-adenosyl-L-methionine contacts are provided by residues Leu83, 108-112, and 126-133; these read GAEKV and VGNQPHSE.

Belongs to the aTrm56 family. Homodimer.

The protein resides in the cytoplasm. It carries out the reaction cytidine(56) in tRNA + S-adenosyl-L-methionine = 2'-O-methylcytidine(56) in tRNA + S-adenosyl-L-homocysteine + H(+). Specifically catalyzes the AdoMet-dependent 2'-O-ribose methylation of cytidine at position 56 in tRNAs. This chain is tRNA (cytidine(56)-2'-O)-methyltransferase, found in Methanothrix thermoacetophila (strain DSM 6194 / JCM 14653 / NBRC 101360 / PT) (Methanosaeta thermophila).